Consider the following 1061-residue polypeptide: Ribonuclease E (1061 aa).

One can recognise an S1 motif domain in the interval 39-119 (ANIYKGKITR…GNKGAALTTF (81 aa)). The tract at residues 57-112 (FVDYGAERHGFLPLKEIAREYFPANYSAHGRPNIKDVLREGQEVIVQIDKEERGNK) is interaction with RNA. The interval 169 to 170 (RT) is interaction with RNA 5'-terminal monophosphate. Asp303 and Asp346 together coordinate Mg(2+). Zn(2+) contacts are provided by Cys404 and Cys407. The tract at residues 404 to 407 (CPRC) is required for zinc-mediated homotetramerization and catalytic activity. Disordered regions lie at residues 532–565 (FAMPDVPPAPTPAEPAAPVVAPAPKAAPATPAAP), 586–731 (EETK…KVRY), and 752–822 (EPIV…RYPT). The segment covering 536–546 (DVPPAPTPAEP) has biased composition (pro residues). The segment covering 547 to 565 (AAPVVAPAPKAAPATPAAP) has biased composition (low complexity). 3 stretches are compositionally biased toward basic and acidic residues: residues 598-608 (AEAKPERQQDR), 615-640 (NRRDRNERRDTRSERTEGSDNREENR), and 652-690 (ETRESRQQAEVTEKARTADEQQAPRRERSRRRNDDKRQA). The segment covering 796–814 (RRSRRSPRHLRVSGQRRRR) has biased composition (basic residues). Positions 833-850 (ASPELASGKVWIRYPIVR) are interaction with enolase. The segment at 1021-1061 (EAPRHSDWQRPTFAFEGKGAAGGHTATHHASAAPARPQPVE) is interaction with PNPase. The interval 1031-1061 (PTFAFEGKGAAGGHTATHHASAAPARPQPVE) is disordered. A compositionally biased stretch (low complexity) spans 1043–1055 (GHTATHHASAAPA).

It belongs to the RNase E/G family. RNase E subfamily. As to quaternary structure, component of the RNA degradosome, which is a multiprotein complex involved in RNA processing and mRNA degradation. Within the RNA degradosome, RNase E assembles into a homotetramer formed by a dimer of dimers. Tetramerization is essential for catalytic activity, but not for RNA-binding. Interacts with RhlB, PNPase (pnp) and enolase (eno). Interacts with DeaD at reduced temperature. The cofactor is Zn(2+). Mg(2+) is required as a cofactor.

It is found in the cytoplasm. The protein localises to the cell inner membrane. It carries out the reaction Endonucleolytic cleavage of single-stranded RNA in A- and U-rich regions.. With respect to regulation, the presence of a 5'-monophosphate on substrate RNA accelerates its cleavage by catalytically activating the enzyme. Binding to the membrane stabilizes protein structure and increases affinity for the substrate. Endoribonuclease that plays a central role in RNA processing and decay. Required for the maturation of 5S and 16S rRNAs and the majority of tRNAs. Also involved in the degradation of most mRNAs. Can also process other RNA species, such as RNAI, a molecule that controls the replication of ColE1 plasmid, and the cell division inhibitor DicF-RNA. It initiates the decay of RNAs by cutting them internally near their 5'-end. It is able to remove poly(A) tails by an endonucleolytic process. Required to initiate rRNA degradation during both starvation and quality control; acts after RNase PH (rph) exonucleolytically digests the 3'-end of the 16S rRNA. Degradation of 16S rRNA leads to 23S rRNA degradation. Processes the 3 tRNA(Pro) precursors immediately after the 3'-CCA to generate the mature ends. Its function is as follows. Prefers 5'-monophosphorylated substrates over 5'-triphosphorylated substrates. 5'-monophosphate-assisted cleavage requires at least 2 and preferably 3 or more unpaired 5'-terminal nucleotides. The optimal spacing between the 5' end and the scissile phosphate appears to be 8 nucleotides. Any sequence of unpaired nucleotides at the 5'-end is tolerated. The chain is Ribonuclease E from Escherichia coli (strain K12).